A 270-amino-acid chain; its full sequence is Aquaporin-11 (270 aa).

Transmembrane regions (helical) follow at residues 5–25 (IMTM…ISIC) and 59–79 (FELG…GLFF). The NPA 1 motif lies at 94–96 (DPS). The helical transmembrane segment at 120–140 (IMGAAVSYRFAKIFWSFGLMA) threads the bilayer. The N-linked (GlcNAc...) asparagine glycan is linked to Asn148. A run of 2 helical transmembrane segments spans residues 153-173 (ASLQ…TIVN) and 184-204 (MLIS…VSGG). The short motif at 207-209 (NPT) is the NPA 2 element. Residues 220–240 (GLSGPSFFLVYWFGPILGSSI) traverse the membrane as a helical segment.

This sequence belongs to the MIP/aquaporin (TC 1.A.8) family.

It is found in the membrane. The catalysed reaction is H2O(in) = H2O(out). Functionally, probable intracellular unorthodox aquaporin that may modulate the water content and osmolytes during anhydrobiosis. The protein is Aquaporin-11 of Milnesium tardigradum (Water bear).